The chain runs to 350 residues: UDP-3-O-acylglucosamine N-acyltransferase (350 aa).

His-244 (proton acceptor) is an active-site residue.

It belongs to the transferase hexapeptide repeat family. LpxD subfamily. As to quaternary structure, homotrimer.

The catalysed reaction is a UDP-3-O-[(3R)-3-hydroxyacyl]-alpha-D-glucosamine + a (3R)-hydroxyacyl-[ACP] = a UDP-2-N,3-O-bis[(3R)-3-hydroxyacyl]-alpha-D-glucosamine + holo-[ACP] + H(+). The protein operates within bacterial outer membrane biogenesis; LPS lipid A biosynthesis. In terms of biological role, catalyzes the N-acylation of UDP-3-O-acylglucosamine using 3-hydroxyacyl-ACP as the acyl donor. Is involved in the biosynthesis of lipid A, a phosphorylated glycolipid that anchors the lipopolysaccharide to the outer membrane of the cell. This chain is UDP-3-O-acylglucosamine N-acyltransferase, found in Herminiimonas arsenicoxydans.